The sequence spans 309 residues: MVYFLLIILSILVVFAFVLGNFSNGFVALVNVIDWVKTRKISSADQILTALVVSRIGLLWVILFHWYANVFNSALYSSEVGAVASNISAIINHFSIWLAASLGIFYLLKIANFSNLIFLHLKKRIRSVVLVILLGPLVFLICNLAVITMDERVWTKEYEGNVTWKIKLRNAIHLSDLTVSTLANLIPFILTLICFLLLICSLHKHLKKMQLHGKGSQDLSTKVHIKALQTVISFLMLYAIYFLYLITLTWNLWTQQNKLVFLLCQTLGIMYPSFHSFFLIMGSRKLKQTFLSVLCQVTCLVKGQQPSTP.

Topologically, residues 1–3 (MVY) are extracellular. Residues 4-26 (FLLIILSILVVFAFVLGNFSNGF) traverse the membrane as a helical segment. Topologically, residues 27–46 (VALVNVIDWVKTRKISSADQ) are cytoplasmic. The helical transmembrane segment at 47–69 (ILTALVVSRIGLLWVILFHWYAN) threads the bilayer. The Extracellular portion of the chain corresponds to 70-83 (VFNSALYSSEVGAV). Residues 84–106 (ASNISAIINHFSIWLAASLGIFY) form a helical membrane-spanning segment. The Cytoplasmic portion of the chain corresponds to 107-126 (LLKIANFSNLIFLHLKKRIR). The chain crosses the membrane as a helical span at residues 127 to 149 (SVVLVILLGPLVFLICNLAVITM). At 150 to 176 (DERVWTKEYEGNVTWKIKLRNAIHLSD) the chain is on the extracellular side. Asn161 is a glycosylation site (N-linked (GlcNAc...) asparagine). A helical membrane pass occupies residues 177–199 (LTVSTLANLIPFILTLICFLLLI). Over 200-230 (CSLHKHLKKMQLHGKGSQDLSTKVHIKALQT) the chain is Cytoplasmic. A helical transmembrane segment spans residues 231–253 (VISFLMLYAIYFLYLITLTWNLW). At 254-258 (TQQNK) the chain is on the extracellular side. The helical transmembrane segment at 259 to 281 (LVFLLCQTLGIMYPSFHSFFLIM) threads the bilayer. Residues 282–309 (GSRKLKQTFLSVLCQVTCLVKGQQPSTP) are Cytoplasmic-facing.

This sequence belongs to the G-protein coupled receptor T2R family.

Its subcellular location is the membrane. Receptor that may play a role in the perception of bitterness and is gustducin-linked. May play a role in sensing the chemical composition of the gastrointestinal content. The activity of this receptor may stimulate alpha gustducin, mediate PLC-beta-2 activation and lead to the gating of TRPM5. The sequence is that of Taste receptor type 2 member 64 (TAS2R64) from Pan paniscus (Pygmy chimpanzee).